The sequence spans 118 residues: Nitrogenase-stabilizing/protective protein NifW (118 aa).

The protein belongs to the NifW family. As to quaternary structure, homotrimer; associates with NifD.

Functionally, may protect the nitrogenase Fe-Mo protein from oxidative damage. This is Nitrogenase-stabilizing/protective protein NifW from Rhodopseudomonas palustris (strain BisB5).